The chain runs to 263 residues: Ribonuclease HII (263 aa).

Residues Lys-71–Asn-262 form the RNase H type-2 domain. The a divalent metal cation site is built by Asp-77, Glu-78, and Asp-172.

Belongs to the RNase HII family. Mn(2+) serves as cofactor. Mg(2+) is required as a cofactor.

It is found in the cytoplasm. The enzyme catalyses Endonucleolytic cleavage to 5'-phosphomonoester.. Endonuclease that specifically degrades the RNA of RNA-DNA hybrids. In Streptococcus pyogenes serotype M1, this protein is Ribonuclease HII.